Reading from the N-terminus, the 237-residue chain is MPTAYKRVLLKLSGEALMGDDAFGINRATIERMVADVAEVVRLGTQLAVVIGGGNIFRGVAGGAAGMDRATADYMGMLATMMNALALQDAMRHAGIEARVQSALRMDQVVEPYIRPRAIRQLEEGKVVIFAAGTGNPFFTTDTAAALRGSEIGAEVVLKATKVDGVYSADPKKDPSATRYTTISFDEAIGRNLQVMDATAFALCRDQKLPIRVFSIVKPGALKRIVQGEDEGTLVHV.

11 to 14 (KLSG) provides a ligand contact to ATP. Glycine 53 contributes to the UMP binding site. ATP-binding residues include glycine 54 and arginine 58. Residues aspartate 73 and 134 to 141 (TGNPFFTT) each bind UMP. The ATP site is built by threonine 161, tyrosine 167, and aspartate 170.

Belongs to the UMP kinase family. In terms of assembly, homohexamer.

The protein localises to the cytoplasm. It carries out the reaction UMP + ATP = UDP + ADP. It functions in the pathway pyrimidine metabolism; CTP biosynthesis via de novo pathway; UDP from UMP (UMPK route): step 1/1. Inhibited by UTP. Catalyzes the reversible phosphorylation of UMP to UDP. This is Uridylate kinase from Paraburkholderia xenovorans (strain LB400).